A 417-amino-acid chain; its full sequence is Zinc-finger homeodomain protein 4 (417 aa).

Positions 1–12 (MVSILQLQTRTE) are enriched in polar residues. Disordered regions lie at residues 1–22 (MVSI…ASAA) and 31–50 (RQQQ…FQER). The span at 13 to 22 (ASPASSASAA) shows a compositional bias: low complexity. Acidic residues predominate over residues 36–46 (QEGEEEEEEFE). The ZF-HD dimerization-type; degenerate zinc-finger motif lies at 145–194 (YRECLKNHAAAIGGNATDGCGEFMPSGEEGSLEALKCSACGCHRNFHRKE). Disordered stretches follow at residues 281–309 (DEMD…FRTK) and 361–417 (NLAK…LKLE). Over residues 286–298 (SGGGGGVGRGGGS) the composition is skewed to gly residues. A DNA-binding region (homeobox) is located at residues 303–366 (KKRFRTKFTA…NNKHNLAKKP (64 aa)). The span at 368–417 (PSSPPPPPQIPPMSMPPSPPPPQIPPMSMPPSPPPMPMPMPPSPPQLKLE) shows a compositional bias: pro residues.

As to quaternary structure, homo- and heterodimer with other ZFHD proteins.

It localises to the nucleus. Its function is as follows. Putative transcription factor. In Oryza sativa subsp. japonica (Rice), this protein is Zinc-finger homeodomain protein 4 (ZHD4).